The sequence spans 199 residues: Peptidyl-tRNA hydrolase (199 aa).

A tRNA-binding site is contributed by Y25. The active-site Proton acceptor is H30. 3 residues coordinate tRNA: Y76, N78, and N124.

It belongs to the PTH family. In terms of assembly, monomer.

It is found in the cytoplasm. The enzyme catalyses an N-acyl-L-alpha-aminoacyl-tRNA + H2O = an N-acyl-L-amino acid + a tRNA + H(+). Hydrolyzes ribosome-free peptidyl-tRNAs (with 1 or more amino acids incorporated), which drop off the ribosome during protein synthesis, or as a result of ribosome stalling. Functionally, catalyzes the release of premature peptidyl moieties from peptidyl-tRNA molecules trapped in stalled 50S ribosomal subunits, and thus maintains levels of free tRNAs and 50S ribosomes. The polypeptide is Peptidyl-tRNA hydrolase (Mycobacterium leprae (strain Br4923)).